A 491-amino-acid polypeptide reads, in one-letter code: PE-PGRS family protein PE_PGRS26 (491 aa).

One can recognise a PE domain in the interval 1–93 (MSNVMVVPGM…VGSYAAAEAA (93 aa)). Gly residues-rich tracts occupy residues 207-221 (NGGTGASGADGGGGL) and 229-238 (GGNGGGGDAG). Disordered regions lie at residues 207-238 (NGGTGASGADGGGGLPPVPASPGGNGGGGDAG), 255-275 (DGGAGGAGDSPNSGANGARGG), and 444-491 (AGGN…GKHG). Residues 444–485 (AGGNGGDGGPSQGGGNPGFGGDGGTGGPGGVGVPDGIGGANG) show a composition bias toward gly residues.

Belongs to the mycobacterial PE family. PGRS subfamily.

It is found in the cell surface. This Mycobacterium tuberculosis (strain ATCC 25618 / H37Rv) protein is PE-PGRS family protein PE_PGRS26.